Consider the following 161-residue polypeptide: Lipoprotein signal peptidase (161 aa).

3 helical membrane-spanning segments follow: residues 9 to 29 (ISLLMTFIVLVFDQVSKWLIT), 63 to 83 (KMLFFYIITIIILIVLVIFYI), and 88 to 108 (FNLFMQVAISLLFAGALGNFI). Active-site residues include Asp-118 and Asp-136. A helical transmembrane segment spans residues 131-151 (IFNIADSSLTIGVIFVIITLI).

It belongs to the peptidase A8 family.

The protein resides in the cell membrane. It carries out the reaction Release of signal peptides from bacterial membrane prolipoproteins. Hydrolyzes -Xaa-Yaa-Zaa-|-(S,diacylglyceryl)Cys-, in which Xaa is hydrophobic (preferably Leu), and Yaa (Ala or Ser) and Zaa (Gly or Ala) have small, neutral side chains.. It participates in protein modification; lipoprotein biosynthesis (signal peptide cleavage). This protein specifically catalyzes the removal of signal peptides from prolipoproteins. This is Lipoprotein signal peptidase from Staphylococcus epidermidis (strain ATCC 35984 / DSM 28319 / BCRC 17069 / CCUG 31568 / BM 3577 / RP62A).